The chain runs to 1040 residues: Multidrug resistance protein MdtB (1040 aa).

12 helical membrane-spanning segments follow: residues 25 to 45 (LLMA…PVAA), 347 to 367 (LMLA…NIPA), 369 to 389 (IIPG…MVFL), 396 to 416 (LTLM…IVVI), 440 to 460 (IGFT…PLLF), 472 to 492 (FAVT…TLTP), 537 to 557 (WLTL…WIVI), 863 to 883 (LGST…VLGV), 888 to 908 (FIHP…ALLA), 910 to 930 (IIAG…LIGI), 968 to 988 (ILMT…STGV), and 998 to 1018 (IAMV…TPVI).

It belongs to the resistance-nodulation-cell division (RND) (TC 2.A.6) family. MdtB subfamily. As to quaternary structure, part of a tripartite efflux system composed of MdtA, MdtB and MdtC. MdtB forms a heteromultimer with MdtC.

It localises to the cell inner membrane. This is Multidrug resistance protein MdtB from Salmonella dublin (strain CT_02021853).